Reading from the N-terminus, the 699-residue chain is Ribosomal RNA large subunit methyltransferase K/L (699 aa).

The THUMP domain maps to D44–L155.

It belongs to the methyltransferase superfamily. RlmKL family.

Its subcellular location is the cytoplasm. It carries out the reaction guanosine(2445) in 23S rRNA + S-adenosyl-L-methionine = N(2)-methylguanosine(2445) in 23S rRNA + S-adenosyl-L-homocysteine + H(+). It catalyses the reaction guanosine(2069) in 23S rRNA + S-adenosyl-L-methionine = N(2)-methylguanosine(2069) in 23S rRNA + S-adenosyl-L-homocysteine + H(+). Specifically methylates the guanine in position 2445 (m2G2445) and the guanine in position 2069 (m7G2069) of 23S rRNA. The sequence is that of Ribosomal RNA large subunit methyltransferase K/L from Alteromonas mediterranea (strain DSM 17117 / CIP 110805 / LMG 28347 / Deep ecotype).